The sequence spans 453 residues: DNA repair protein RadA (453 aa).

The segment at 10–27 (CQECGYQSPKYLGRCPNC) adopts a C4-type zinc-finger fold. 95–102 (GDPGIGKS) provides a ligand contact to ATP. A RadA KNRFG motif motif is present at residues 251–255 (KNRFG). The lon-protease-like stretch occupies residues 350 to 453 (DAYLKSAGGV…VGQVLKAVFS (104 aa)).

It belongs to the RecA family. RadA subfamily.

Functionally, DNA-dependent ATPase involved in processing of recombination intermediates, plays a role in repairing DNA breaks. Stimulates the branch migration of RecA-mediated strand transfer reactions, allowing the 3' invading strand to extend heteroduplex DNA faster. Binds ssDNA in the presence of ADP but not other nucleotides, has ATPase activity that is stimulated by ssDNA and various branched DNA structures, but inhibited by SSB. Does not have RecA's homology-searching function. In Streptococcus pyogenes serotype M6 (strain ATCC BAA-946 / MGAS10394), this protein is DNA repair protein RadA.